Here is a 936-residue protein sequence, read N- to C-terminus: MAEMEKEGRPPESKRSRKPAHPVKREINAEMKVPSNRPLPGAGQAGNLHGNSPYLMSFAENTMNELLGWYGYDKVELRDSDDIEIRNYPDGEMRQHISVLKENSLPKASTLENSSGSPPHANSSGSTPTSRNGVTAESSVNPSSSKEHGGLPIIVPLIPPPLIKAPAEEDSSNVQIMCAWCQKVGVKRYSLSMGSELKSFCSEKCFAACRRAYFKRNKLGYVRNCSAREEEGVPTHSLSKDTPRLVLKTNSDVLVCDWCKHIRHTKEYLDFGAGERRLQFCSAKCLNQYKMDIFYKETQAALPGGLCNPPLPTSDTKSESGAGVQLLTPESWSAPLSELRSRKAPSPVGATIAGPSGSTSGSPSEAGTVCSSSSSSSSSSSSTKIPTPRPHESPSLPPPHPPPISGLHPALGMPPGSPPMVMTPRGPVPFPIFMEHQMMQQMRPPFLRPPGPNSPHSNPMIPGIGPPPPPRTLCPPSSPMHRPLLSPHLHPSSTPTLSGNPPGIMPPHPAAHMPGLPFPPVNMMPSGPIPVPPIMNIGMPSLAPLVPPPTLLVPYPVIVPLPVPIPIPVPIPYNPQRSGDRPGNDGTLPNTANEQKDSKAPPSFSSRGEERDFQKAPPNSDTLSPEFSKQTEQGRTNMADLMVKMENSGKGSSEHSHKDTPADGVIDLTTSHRSRQQLVIQRAVTCVQVKAEPGLSPPPALLGETELDGSTSISTGTAKDDHRDTYSNAESPLASVALPCADPSYCSGTPPLSQPITCSASIIPSNITTAKTEPGSATPCNVIVNGSCNLPPTESLIRTPPLEQRPQVDTCRRTATVCDEPAGADLEGEDLKENSCLATEKDSAGKRCSNDQSAITTGTGDDKSQSPEDDPSGEDHAYALPLMPKPGCVIQPVPKPAEKTAAILPCGLTAPLTGTVPMEMEPPLKRRCLRIRNQNK.

Over residues 1 to 14 (MAEMEKEGRPPESK) the composition is skewed to basic and acidic residues. Disordered stretches follow at residues 1 to 46 (MAEM…GQAG) and 108 to 151 (ASTL…HGGL). The span at 108 to 144 (ASTLENSSGSPPHANSSGSTPTSRNGVTAESSVNPSS) shows a compositional bias: polar residues. 2 consecutive FCS-type zinc fingers follow at residues 169–207 (EDSS…KCFA) and 247–287 (LKTN…KCLN). 6 disordered regions span residues 311–330 (LPTS…LTPE), 336–424 (LSEL…VMTP), 486–511 (SPHL…HPAA), 574–632 (NPQR…KQTE), 697–727 (PPPA…DTYS), and 842–877 (DSAG…EDHA). Residues 349–382 (GATIAGPSGSTSGSPSEAGTVCSSSSSSSSSSSS) are compositionally biased toward low complexity. Residues 395-404 (SLPPPHPPPI) show a composition bias toward pro residues. 3 stretches are compositionally biased toward polar residues: residues 617 to 632 (PPNS…KQTE), 708 to 717 (DGSTSISTGT), and 850 to 859 (NDQSAITTGT).

The protein belongs to the SOBP family.

In terms of biological role, implicated in development of the cochlea. This Danio rerio (Zebrafish) protein is Sine oculis-binding protein homolog A (sobpa).